The sequence spans 1058 residues: MPKRKDIQKIMVIGSGPIIIGQAAEFDYAGTQACLALKEEGYKVILVNSNPATIMTDKEIADKVYIEPLTLEFVNRIIRKERPDAILPTLGGQTGLNMAMALSKAGILDDLEIELLGTKLSAIDQAEDRDLFKQLMQELDQPIPESTIVKTVDEAVTFARDIGYPVIVRPAFTLGGTGGGICSSEEELCEITENGLKLSPVTQCLIERSIAGFKEIEYEVMRDSADNALVVCNMENFDPVGIHTGDSIVFAPTQTLSDIENQMLRDASLKIIRALKIEGGCNVQLALDPYSFKYYVIEVNPRVSRSSALASKATGYPIAKLAAKIAVGLTLDEMINPITGTTYAMFEPALDYVVAKIPRFPFDKFEHGERQLGTQMKATGEVMAIGRNLEESLLKACRSLEIGVCHNEMTSLSNISDEELVTKVIKAQDDRLFYLSEAIRRGYSIEELESLTKIDLFFLDKLLHIVEIEQELQMHVDHLESLKKAKRYGFSDQKIAEIWQKDESDIRAMRHSHSLYPVYKMVDTCAAEFDAKTPYFYSTYELENESVQSNKESILVLGSGPIRIGQGVEFDYATVHSVKAIQKAGYEAIIMNSNPETVSTDFSVSDKLYFEPLTFEDVMNVIDLEQPKGVIVQFGGQTAINLAQALSEAGVTILGTQVEDLDRAEDRDLFEKALKELGIPQPQGQTATNEEEALEAAKKIGFPVLVRPSYVLGGRAMEIVENKEDLIEYIRTAVKASPEHPILVDSYIFGKECEVDAISEGKSVLIPGIMEHIERAGVHSGDSMAVYPPQQLSKQIQETIAEYTKRLAIGLNCIGMMNVQFVIKNEQVYVIEVNPRASRTVPFLSKVTGIPMAQIATKLILGQTLKDLGYEDGLYPQSQLVHIKAPVFSFTKLAQVDSLLGPEMKSTGEVMGSDTSLEKALYKAFEANNSHLSEFGQIVFTIADDSKAEALSLARRFKAIGYQIMATQGTAAYFAEQGLSACLVGKIGDAANDIPTLVRHGHVQAIVNTVGIKRTADKDGQMIRSSAIEQGVPLFTALDTAKAMLTVLESRCFNIEAI.

The interval 1–401 (MPKRKDIQKI…SLLKACRSLE (401 aa)) is carboxyphosphate synthetic domain. The ATP site is built by arginine 129, arginine 169, glycine 175, glycine 176, arginine 208, isoleucine 210, glutamate 215, glycine 241, isoleucine 242, histidine 243, glutamine 284, and glutamate 298. The 195-residue stretch at 133–327 (KQLMQELDQP…IAKLAAKIAV (195 aa)) folds into the ATP-grasp 1 domain. Mg(2+) contacts are provided by glutamine 284, glutamate 298, and asparagine 300. Residues glutamine 284, glutamate 298, and asparagine 300 each contribute to the Mn(2+) site. The tract at residues 402 to 546 (IGVCHNEMTS…YSTYELENES (145 aa)) is oligomerization domain. Positions 547-929 (VQSNKESILV…ALYKAFEANN (383 aa)) are carbamoyl phosphate synthetic domain. Residues 671–861 (EKALKELGIP…MAQIATKLIL (191 aa)) enclose the ATP-grasp 2 domain. Arginine 707, serine 746, isoleucine 748, glutamate 752, glycine 777, valine 778, histidine 779, serine 780, glutamine 820, and glutamate 832 together coordinate ATP. 3 residues coordinate Mg(2+): glutamine 820, glutamate 832, and asparagine 834. 3 residues coordinate Mn(2+): glutamine 820, glutamate 832, and asparagine 834. Residues 930-1058 (SHLSEFGQIV…ESRCFNIEAI (129 aa)) form the MGS-like domain. The tract at residues 930-1058 (SHLSEFGQIV…ESRCFNIEAI (129 aa)) is allosteric domain.

It belongs to the CarB family. Composed of two chains; the small (or glutamine) chain promotes the hydrolysis of glutamine to ammonia, which is used by the large (or ammonia) chain to synthesize carbamoyl phosphate. Tetramer of heterodimers (alpha,beta)4. Mg(2+) is required as a cofactor. Requires Mn(2+) as cofactor.

It catalyses the reaction hydrogencarbonate + L-glutamine + 2 ATP + H2O = carbamoyl phosphate + L-glutamate + 2 ADP + phosphate + 2 H(+). The catalysed reaction is hydrogencarbonate + NH4(+) + 2 ATP = carbamoyl phosphate + 2 ADP + phosphate + 2 H(+). The protein operates within amino-acid biosynthesis; L-arginine biosynthesis; carbamoyl phosphate from bicarbonate: step 1/1. Its pathway is pyrimidine metabolism; UMP biosynthesis via de novo pathway; (S)-dihydroorotate from bicarbonate: step 1/3. Its function is as follows. Large subunit of the glutamine-dependent carbamoyl phosphate synthetase (CPSase). CPSase catalyzes the formation of carbamoyl phosphate from the ammonia moiety of glutamine, carbonate, and phosphate donated by ATP, constituting the first step of 2 biosynthetic pathways, one leading to arginine and/or urea and the other to pyrimidine nucleotides. The large subunit (synthetase) binds the substrates ammonia (free or transferred from glutamine from the small subunit), hydrogencarbonate and ATP and carries out an ATP-coupled ligase reaction, activating hydrogencarbonate by forming carboxy phosphate which reacts with ammonia to form carbamoyl phosphate. The polypeptide is Carbamoyl phosphate synthase large chain (Streptococcus pyogenes serotype M3 (strain SSI-1)).